A 329-amino-acid chain; its full sequence is AUGMIN subunit 7 (329 aa).

A coiled-coil region spans residues 169 to 197 (DVSELETKLSEQAKILSNLQQKVDDLAAK).

In terms of assembly, part of the augmin complex composed of 8 subunits. The complex acts on microtubules and interacts with gamma-tubulin in spindles and the phragmoplast.

Its subcellular location is the cytoplasm. The protein resides in the cytoskeleton. It is found in the spindle. The protein localises to the phragmoplast. Contributes to the assembly of the acentrosomal spindle and phragmoplast microtubule arrays as part of the augmin complex. Regulates the association of gamma-tubulin with the spindle and phragmoplast microtubules. In Arabidopsis thaliana (Mouse-ear cress), this protein is AUGMIN subunit 7.